The chain runs to 467 residues: 6-phospho-beta-galactosidase (467 aa).

D-galactose 6-phosphate is bound by residues Gln19, His116, Asn159, Glu160, and Asn297. Residue Glu160 is the Proton donor of the active site. Glu375 functions as the Nucleophile in the catalytic mechanism. Residues Ser428, Trp429, Lys435, and Tyr437 each coordinate D-galactose 6-phosphate.

The protein belongs to the glycosyl hydrolase 1 family.

The catalysed reaction is a 6-phospho-beta-D-galactoside + H2O = D-galactose 6-phosphate + an alcohol. It participates in carbohydrate metabolism; lactose degradation; D-galactose 6-phosphate and beta-D-glucose from lactose 6-phosphate: step 1/1. Inhibited by both galactose-6-phosphate and ATP. The protein is 6-phospho-beta-galactosidase of Leptotrichia buccalis (strain ATCC 14201 / DSM 1135 / JCM 12969 / NCTC 10249 / C-1013-b).